The following is a 489-amino-acid chain: GTPase Der (489 aa).

2 EngA-type G domains span residues 30-199 (PVVS…KDKP) and 227-403 (FRLA…SRSH). GTP contacts are provided by residues 36 to 43 (GRQNVGKS), 85 to 89 (DTPGL), 151 to 154 (NKAD), 233 to 240 (GKPNSGKS), 280 to 284 (DTAGI), and 345 to 348 (NKWD). The 85-residue stretch at 404–488 (RKVSTSELNK…PIRLEFRSDR (85 aa)) folds into the KH-like domain.

Belongs to the TRAFAC class TrmE-Era-EngA-EngB-Septin-like GTPase superfamily. EngA (Der) GTPase family. In terms of assembly, associates with the 50S ribosomal subunit.

GTPase that plays an essential role in the late steps of ribosome biogenesis. The chain is GTPase Der from Leptospira interrogans serogroup Icterohaemorrhagiae serovar Lai (strain 56601).